The following is a 356-amino-acid chain: HORMA domain-containing protein 1 (356 aa).

One can recognise an HORMA domain in the interval 24–225 (QQSLVLVKKL…TPFHSIKMNV (202 aa)). 2 disordered regions span residues 282–305 (ETQETQEQPHRHTKEDFSTNPKMD) and 333–356 (QLEFPLSQDPQPSVPKRRKVSVPK). The segment covering 288 to 298 (EQPHRHTKEDF) has biased composition (basic and acidic residues). Over residues 347-356 (PKRRKVSVPK) the composition is skewed to basic residues.

The protein resides in the nucleus. It localises to the chromosome. Plays a key role in meiotic progression by ensuring that sufficient numbers of processed DNA double-strand breaks (DSBs) are available for successful homology search, promoting synaptonemal-complex formation independently and playing key role in the male mid-pachytene checkpoint and the female meiotic prophase checkpoint. The polypeptide is HORMA domain-containing protein 1 (hormad1) (Danio rerio (Zebrafish)).